Reading from the N-terminus, the 100-residue chain is MRLTPHEQERLLLSYAAELARRRRARGLRLNHPEAIAVIADHILEGARDGRTVAELMASGREVLGRDDVMEGVPEMLAEVQVEATFPDGTKLVTVHQPIA.

It belongs to the urease gamma subunit family. Heterotrimer of UreA (gamma), UreB (beta) and UreC (alpha) subunits. Three heterotrimers associate to form the active enzyme.

Its subcellular location is the cytoplasm. It carries out the reaction urea + 2 H2O + H(+) = hydrogencarbonate + 2 NH4(+). It functions in the pathway nitrogen metabolism; urea degradation; CO(2) and NH(3) from urea (urease route): step 1/1. The sequence is that of Urease subunit gamma from Mycobacterium bovis (strain ATCC BAA-935 / AF2122/97).